The chain runs to 88 residues: UPF0335 protein Mnod_5968 (88 aa).

This sequence belongs to the UPF0335 family.

The sequence is that of UPF0335 protein Mnod_5968 from Methylobacterium nodulans (strain LMG 21967 / CNCM I-2342 / ORS 2060).